The sequence spans 348 residues: VIP36-like protein (348 aa).

A signal peptide spans 1–38 (MAVALGPSGWWQRWRRRLSAREVSRMLLLLLLLGSGQG). The Lumenal portion of the chain corresponds to 39-313 (PRQVGAGQTF…APLPPLSGLA (275 aa)). Positions 49–274 (EYLKREHSLS…DVISLKLFEL (226 aa)) constitute an L-type lectin-like domain. Residues serine 93 and aspartate 128 each coordinate a carbohydrate. 3 residues coordinate Ca(2+): aspartate 159, tyrosine 161, and asparagine 163. A carbohydrate contacts are provided by tyrosine 161 and asparagine 163. N-linked (GlcNAc...) asparagine glycosylation occurs at asparagine 181. A carbohydrate is bound at residue histidine 188. Residue aspartate 191 coordinates Ca(2+). Cysteine 200 and cysteine 237 are disulfide-bonded. Residue 258–260 (GDL) participates in a carbohydrate binding. The chain crosses the membrane as a helical span at residues 314–334 (LFLIVFFSLVFSVFAIVIGII). Residues 335–348 (LYNKWQDQSRKRFY) are Cytoplasmic-facing. Positions 344-346 (RKR) match the Endoplasmic reticulum retention signal motif.

It localises to the endoplasmic reticulum membrane. The protein resides in the golgi apparatus membrane. Its function is as follows. May be involved in the regulation of export from the endoplasmic reticulum of a subset of glycoproteins. May function as a regulator of ERGIC-53. This Bos taurus (Bovine) protein is VIP36-like protein (LMAN2L).